The primary structure comprises 112 residues: Large ribosomal subunit protein uL22 (112 aa).

It belongs to the universal ribosomal protein uL22 family. As to quaternary structure, part of the 50S ribosomal subunit.

This protein binds specifically to 23S rRNA; its binding is stimulated by other ribosomal proteins, e.g. L4, L17, and L20. It is important during the early stages of 50S assembly. It makes multiple contacts with different domains of the 23S rRNA in the assembled 50S subunit and ribosome. Functionally, the globular domain of the protein is located near the polypeptide exit tunnel on the outside of the subunit, while an extended beta-hairpin is found that lines the wall of the exit tunnel in the center of the 70S ribosome. This chain is Large ribosomal subunit protein uL22, found in Caldanaerobacter subterraneus subsp. tengcongensis (strain DSM 15242 / JCM 11007 / NBRC 100824 / MB4) (Thermoanaerobacter tengcongensis).